The following is a 96-amino-acid chain: Co-chaperonin GroES (96 aa).

It belongs to the GroES chaperonin family. In terms of assembly, heptamer of 7 subunits arranged in a ring. Interacts with the chaperonin GroEL.

Its subcellular location is the cytoplasm. In terms of biological role, together with the chaperonin GroEL, plays an essential role in assisting protein folding. The GroEL-GroES system forms a nano-cage that allows encapsulation of the non-native substrate proteins and provides a physical environment optimized to promote and accelerate protein folding. GroES binds to the apical surface of the GroEL ring, thereby capping the opening of the GroEL channel. In Shewanella loihica (strain ATCC BAA-1088 / PV-4), this protein is Co-chaperonin GroES.